The sequence spans 760 residues: Xaa-Pro dipeptidyl-peptidase (760 aa).

Active-site charge relay system residues include S349, D469, and H499.

It belongs to the peptidase S15 family. Homodimer.

The protein localises to the cytoplasm. It catalyses the reaction Hydrolyzes Xaa-Pro-|- bonds to release unblocked, N-terminal dipeptides from substrates including Ala-Pro-|-p-nitroanilide and (sequentially) Tyr-Pro-|-Phe-Pro-|-Gly-Pro-|-Ile.. Its function is as follows. Removes N-terminal dipeptides sequentially from polypeptides having unsubstituted N-termini provided that the penultimate residue is proline. The protein is Xaa-Pro dipeptidyl-peptidase of Streptococcus pyogenes serotype M12 (strain MGAS9429).